Consider the following 170-residue polypeptide: Large ribosomal subunit protein uL5 (170 aa).

This sequence belongs to the universal ribosomal protein uL5 family. In terms of assembly, part of the 50S ribosomal subunit; contacts the 5S rRNA and probably tRNA. Forms a bridge to the 30S subunit in the 70S ribosome.

This is one of the proteins that bind and probably mediate the attachment of the 5S RNA into the large ribosomal subunit, where it forms part of the central protuberance. In the 70S ribosome it contacts protein S13 of the 30S subunit (bridge B1b), connecting the 2 subunits; this bridge is implicated in subunit movement. May contact the P site tRNA; the 5S rRNA and some of its associated proteins might help stabilize positioning of ribosome-bound tRNAs. The chain is Large ribosomal subunit protein uL5 from Methanobrevibacter smithii (strain ATCC 35061 / DSM 861 / OCM 144 / PS).